A 57-amino-acid chain; its full sequence is Dendroaspis polylepis MT9 (57 aa).

4 disulfide bridges follow: cysteine 3–cysteine 22, cysteine 17–cysteine 36, cysteine 38–cysteine 49, and cysteine 50–cysteine 55.

This sequence belongs to the three-finger toxin family. Short-chain subfamily. In terms of tissue distribution, expressed by the venom gland.

It is found in the secreted. In terms of biological role, when tested on muscarinic GPCR, specifically antagonizes the type 2 receptor (CHRM2) subtype (Ki/Kd=120-399 nM). Ex vivo, it reverses the M2R-agonist-induced relaxation in rat and human arteries. This chain is Dendroaspis polylepis MT9, found in Dendroaspis polylepis polylepis (Black mamba).